Consider the following 262-residue polypeptide: Cell division protein FtsQ (262 aa).

At 1–20 the chain is on the cytoplasmic side; sequence MSWSDKRRHWRARKSQVNWY. Residues 21–41 traverse the membrane as a helical segment; the sequence is LWSGIGFLSLVIGSFVFGGYL. Over 42 to 262 the chain is Periplasmic; that stretch reads LHKFLNDAST…EPIINDEKPR (221 aa). The 70-residue stretch at 52–121 folds into the POTRA domain; sequence LPIEAVAIKG…AKLRVYLQEQ (70 aa).

This sequence belongs to the FtsQ/DivIB family. FtsQ subfamily. Part of a complex composed of FtsB, FtsL and FtsQ.

The protein resides in the cell inner membrane. Essential cell division protein. May link together the upstream cell division proteins, which are predominantly cytoplasmic, with the downstream cell division proteins, which are predominantly periplasmic. May control correct divisome assembly. This Shewanella oneidensis (strain ATCC 700550 / JCM 31522 / CIP 106686 / LMG 19005 / NCIMB 14063 / MR-1) protein is Cell division protein FtsQ.